A 313-amino-acid polypeptide reads, in one-letter code: Ribosomal RNA small subunit methyltransferase H (313 aa).

Residues 35–37 (GGH), Asp-55, Phe-79, Asp-100, and Gln-107 contribute to the S-adenosyl-L-methionine site.

This sequence belongs to the methyltransferase superfamily. RsmH family.

It is found in the cytoplasm. It carries out the reaction cytidine(1402) in 16S rRNA + S-adenosyl-L-methionine = N(4)-methylcytidine(1402) in 16S rRNA + S-adenosyl-L-homocysteine + H(+). Specifically methylates the N4 position of cytidine in position 1402 (C1402) of 16S rRNA. The polypeptide is Ribosomal RNA small subunit methyltransferase H (Burkholderia orbicola (strain MC0-3)).